Reading from the N-terminus, the 1351-residue chain is MSKRQKEFHDSLANEKTRVRLYKSGKNWVKSGIKEIEMFKIMGLPFISHSLVSQDNQSISKKITGYGLKTTAVIGGAFTVNMLHDQQAFAASDAPLTSELNTQSETVGNQNSTTIEASTSTTDSTSVTKNSSSEQTSNSDTVSSEKSENVTSTTNSTSNQQEKLTSTSESTSPKNTTSSSDTKSVTSISSTDQQTNTSTNQSTASNTTSQSTTPASANLNKTSTTSTSTAPIKLRTFSRLAMSTFASAATTSAVTANTITVNKDNLKQYMTTSGNATYDQSTGIVTLTQDAYSQKGAITLGTRIDSNKSFHFSGKVNLGNKYEGNGNGGDGIGFAFSPGVLGETGLNGAAVGIGGLSNAFGFKLDTYHNTSKPNAAAKANADPSNVAGGGAFGAFVTTDSYGVATTYTSSSAADNAAKLKVQPTNNTFQDFDINYNGDTKVMTVTYAGQTWTRNISDWIAKSGTTNFSLSMTASTGGATNLQQVQFGTFEYTESAVTQVRYVDVTTGKDIIPPKTYSGNVDQVVTIDNQQSALTAKGYNYTSVDSSYASTYNDTNKTVKMTNAGQSVTYYFTDVKAPTVTVGNQTIEVGKTMNPIVLTTTDNGTGTVTNTVTGLPSGLSYDSATNSIIGTPTKIGQSTVTVVSTDQANNKSTTTFTINVVDTTAPTVTPIGDQSSEVYSPISPIKIATQDNSGNAVTNTVTGLPSGLTFDSTNNTISGTPTNIGTSTITIVSTDASGNKTTTTFKYEVTRNSMSDSVSTSGSTQQSQSVSTSKADSQSASTSTSGSIVVSTSASTSKSTSVSLSDSVSASKSLSTSESNSVSSSTSTSLVNSQSVSSSMSGSVSKSTSLSDSISNSSSTEKSESLSTSTSDSLRTSTSLSDSVSMSTSGSLSKSQSLSTSTSDSASTSQSVSDSTSNSISTSESLSESASTSDSISISNSIANSQSASTSKSDSQSTSISLSTSDSKSMSTSESLSDSTSTSDSVSGSLSIATSQSVSTSSSDSMSTSEMISDSMSTSGSLAASDSKSMSVSSSMSTSQSGSTSESLSDSISTSDSDSKSLSLSTSQSGSTSTSTSTSSSVRTSESQSTSGSMSASQFDSTSISTSFSDSTSDSKSASTASSESISQSVSTSTSGSTSGSTSTSTSESLSMSGSDSTSVSDSTSMSESDSTSVSMSQDKSDSTSISDSESVSTSTSMSLSTSDSTSTSESLSTSMSGSQSISDSTSTSMSNSTSMSNSTSTSMSGSTSTSESNSMHPSDSMSMHHTHSTSTSRSSSEATTSTSESQSTLSATSEVTKHNGTPAQSEKRLPDTGDSIKQNGLLGGVMTLLVGLGLMKRKKKKDENDQDDSQA.

The signal sequence occupies residues Met1–Phe89. Positions Ala90–Ala230 are serine-rich repeat region 1, SRR1. A compositionally biased stretch (polar residues) spans Leu100–Asn111. Disordered regions lie at residues Leu100–Ser228 and Asn751–Gly1323. 2 stretches are compositionally biased toward low complexity: residues Ser112 to Ser133 and Asn149 to Ser228. Residues Pro231 to Asn751 form a non-repeat region (NRR) region. Over residues Ser752–Glu1294 the composition is skewed to low complexity. The tract at residues Ser752–Thr1312 is serine-rich repeat region 1, SRR1. An LPXTG sorting signal motif is present at residues Leu1309–Gly1313. The residue at position 1312 (Thr1312) is a Pentaglycyl murein peptidoglycan amidated threonine. A propeptide spans Gly1313–Ala1351 (removed by sortase).

This sequence belongs to the serine-rich repeat protein (SRRP) family. Post-translationally, proteolytically cleaved by a metalloprotease. Glycosylated. It is probable that most of the Ser residues in SSR1 and SSR2 are O-GlcNAcylated. Sequential glycosylation by sugar transferases are able to generate complex sugar polymorphisms.

The protein localises to the secreted. It is found in the cell wall. In terms of biological role, mediates binding to human platelets, possibly through a receptor-ligand interaction. Probably associated with virulence in endovascular infection. The protein is Serine-rich adhesin for platelets (sasA) of Staphylococcus aureus (strain MRSA252).